The primary structure comprises 707 residues: DNA ligase (707 aa).

NAD(+) contacts are provided by residues 48–52 (DAEYD), 97–98 (SI), and glutamate 134. Lysine 136 functions as the N6-AMP-lysine intermediate in the catalytic mechanism. Arginine 157, glutamate 193, lysine 320, and lysine 344 together coordinate NAD(+). The Zn(2+) site is built by cysteine 438, cysteine 441, cysteine 456, and cysteine 462. The BRCT domain occupies 621-707 (VAPKPLSGKT…DSPPDERIPA (87 aa)).

The protein belongs to the NAD-dependent DNA ligase family. LigA subfamily. It depends on Mg(2+) as a cofactor. The cofactor is Mn(2+).

The catalysed reaction is NAD(+) + (deoxyribonucleotide)n-3'-hydroxyl + 5'-phospho-(deoxyribonucleotide)m = (deoxyribonucleotide)n+m + AMP + beta-nicotinamide D-nucleotide.. Its function is as follows. DNA ligase that catalyzes the formation of phosphodiester linkages between 5'-phosphoryl and 3'-hydroxyl groups in double-stranded DNA using NAD as a coenzyme and as the energy source for the reaction. It is essential for DNA replication and repair of damaged DNA. This is DNA ligase from Polaromonas naphthalenivorans (strain CJ2).